Consider the following 415-residue polypeptide: Peptide chain release factor subunit 1-2 (415 aa).

The protein belongs to the eukaryotic release factor 1 family. In terms of assembly, heterodimer of two subunits, one of which binds GTP.

It localises to the cytoplasm. Its function is as follows. Directs the termination of nascent peptide synthesis (translation) in response to the termination codons UAA, UAG and UGA. The sequence is that of Peptide chain release factor subunit 1-2 from Methanosarcina acetivorans (strain ATCC 35395 / DSM 2834 / JCM 12185 / C2A).